A 303-amino-acid chain; its full sequence is Recombination-associated protein RdgC (303 aa).

The protein belongs to the RdgC family.

The protein localises to the cytoplasm. It localises to the nucleoid. May be involved in recombination. This chain is Recombination-associated protein RdgC, found in Enterobacter sp. (strain 638).